An 842-amino-acid polypeptide reads, in one-letter code: Probable vinculin (842 aa).

Positions Lys-585–Ala-679 form a coiled coil.

This sequence belongs to the vinculin/alpha-catenin family. As to quaternary structure, monomer. Associates with F-actin. Interacts with aarA, ctxA, ctxB and rgaA. In terms of tissue distribution, epithelium.

It localises to the cytoplasm. It is found in the cell cortex. Its subcellular location is the cell junction. Involved in cell adhesion. Thought to play an important role in cytokinesis B, probably by providing substrate adhesion and traction forces. Required to organize and polarize the tip epithelium during cytokinesis. Required for the normal distribution of myosin in the tip epithelium. Involved in the localization of ctxA, ctxB, dcsA, exoc6 and rgaA. Thought to form a complex with ctxA, ctxB, and rgaA which regulates myosin accumulation to the apical plasma membrane. This is Probable vinculin (ctnnA) from Dictyostelium discoideum (Social amoeba).